The following is a 719-amino-acid chain: Glutathionylspermidine synthase (719 aa).

Positions 54–200 constitute a Peptidase C51 domain; it reads CLPLSSFERK…TESGEVELLD (147 aa). A glutathione-binding site is contributed by Arg-350. Residue 350 to 352 coordinates ATP; the sequence is RFD. Mg(2+)-binding residues include Asp-352, Glu-364, and Asn-366. Glutathione is bound at residue Ser-369. Residue Glu-432 coordinates spermidine. Residues Glu-433 and Thr-501 each contribute to the glutathione site. ATP-binding positions include Lys-544, Lys-579, Gly-586, Gln-653, and 689 to 691; that span reads KIT.

The protein in the C-terminal section; belongs to the glutathionylspermidine synthase preATP-grasp family. It depends on Mg(2+) as a cofactor. In terms of processing, the N-terminus is blocked.

It catalyses the reaction spermidine + glutathione + ATP = glutathionylspermidine + ADP + phosphate + H(+). Functionally, conjugates glutathione (gamma-Glu-Cys-Gly) and spermidine to form glutathionylspermidine in the biosynthesis trypanothione (N(1),N(8)-bis(glutathionyl)spermidine), which is involved in maintaining intracellular thiol redox and in defense against oxidants. This Crithidia fasciculata protein is Glutathionylspermidine synthase (GSP).